A 347-amino-acid polypeptide reads, in one-letter code: tRNA N6-adenosine threonylcarbamoyltransferase (347 aa).

Fe cation contacts are provided by His-115 and His-119. Substrate-binding positions include 137 to 141, Asp-170, Gly-183, and Asn-281; that span reads LASGG. Fe cation is bound at residue Asp-309.

This sequence belongs to the KAE1 / TsaD family. Requires Fe(2+) as cofactor.

The protein localises to the cytoplasm. The catalysed reaction is L-threonylcarbamoyladenylate + adenosine(37) in tRNA = N(6)-L-threonylcarbamoyladenosine(37) in tRNA + AMP + H(+). Required for the formation of a threonylcarbamoyl group on adenosine at position 37 (t(6)A37) in tRNAs that read codons beginning with adenine. Is involved in the transfer of the threonylcarbamoyl moiety of threonylcarbamoyl-AMP (TC-AMP) to the N6 group of A37, together with TsaE and TsaB. TsaD likely plays a direct catalytic role in this reaction. The chain is tRNA N6-adenosine threonylcarbamoyltransferase from Methylorubrum populi (strain ATCC BAA-705 / NCIMB 13946 / BJ001) (Methylobacterium populi).